The primary structure comprises 671 residues: Autophagy-related protein 22-2 (671 aa).

2 stretches are compositionally biased toward polar residues: residues 1-10 and 19-34; these read MVPRNFSESQ and PSNSTKISYRSHSSSF. The disordered stretch occupies residues 1-67; sequence MVPRNFSESQ…RDVPAQYAGE (67 aa). Residues Asn5 and Asn21 are each glycosylated (N-linked (GlcNAc...) asparagine). Positions 39-60 are enriched in basic and acidic residues; it reads ERSSSADHDSMGPDIGSAHRDV. The next 4 helical transmembrane spans lie at 83-103, 155-175, 188-208, and 212-232; these read YGFAAEVFVICGIGSFIPITL, SFAMYSFSLSVLFQAILVVSI, LLLFFAFAGSITTMLFLTVVP, and LLGALWAIISNTCFGASFVLL. A disordered region spans residues 251–271; that stretch reads PDFSPEFRPSSVDESPPEHSL. A helical membrane pass occupies residues 324 to 344; sequence IGIGYSAGLFLQCVSIVIIWL. Asn346 carries an N-linked (GlcNAc...) asparagine glycan. The next 7 helical transmembrane spans lie at 354–374, 422–442, 457–477, 491–511, 523–543, 560–582, and 591–611; these read LVLFFIGLWWFLFTIPAALWL, FFLAAWFLLSDAIATVSGTAV, GLINVIATTAGVLGAFSWAAI, ACICIFEMIPLYGLLGFLPIV, WEMYPLGFVYGFVLGGLSSYC, YALYAITDKGSSVFGPAIVGAIV, and AFWFLAVLVGLPAPLIYFVNV. Positions 634–671 are disordered; it reads ESAGEGSRGSSIDHESGQNEGLIYPRVGENAGRGRNDI.

The protein belongs to the ATG22 family.

It is found in the vacuole membrane. Its function is as follows. Vacuolar effluxer which mediate the efflux of amino acids resulting from autophagic degradation. The release of autophagic amino acids allows the maintenance of protein synthesis and viability during nitrogen starvation. The protein is Autophagy-related protein 22-2 (atg22-2) of Sclerotinia sclerotiorum (strain ATCC 18683 / 1980 / Ss-1) (White mold).